The following is a 1062-amino-acid chain: Probable sucrose-phosphate synthase 3 (1062 aa).

Residues 113-122 (EREQGRRDAT) are compositionally biased toward basic and acidic residues. The interval 113–141 (EREQGRRDATEDLSEDLSEGEKGDGLGEI) is disordered. Phosphoserine is present on residues S126, S130, and S156. The disordered stretch occupies residues 715 to 735 (MDGDKPSLNGSLEPNSADPVK).

The protein belongs to the glycosyltransferase 1 family. In terms of assembly, homodimer or homotetramer.

It catalyses the reaction beta-D-fructose 6-phosphate + UDP-alpha-D-glucose = sucrose 6(F)-phosphate + UDP + H(+). The protein operates within glycan biosynthesis; sucrose biosynthesis; sucrose from D-fructose 6-phosphate and UDP-alpha-D-glucose: step 1/2. With respect to regulation, activity is regulated by phosphorylation and moderated by concentration of metabolites and light. Its function is as follows. Plays a role in photosynthetic sucrose synthesis by catalyzing the rate-limiting step of sucrose biosynthesis from UDP-glucose and fructose- 6-phosphate. Involved in the regulation of carbon partitioning in the leaves of plants. May regulate the synthesis of sucrose and therefore play a major role as a limiting factor in the export of photoassimilates out of the leaf. Plays a role for sucrose availability that is essential for plant growth and fiber elongation. In Arabidopsis thaliana (Mouse-ear cress), this protein is Probable sucrose-phosphate synthase 3 (SPS3).